The primary structure comprises 436 residues: MSLTNQNSKSKAAFERALPLMPGGVNSPVRAYKSVGMTPIFAERAQGSRLYDIDGKEYIDYVLSWGPMILGHADPIVTAAIQEQATRGWSYGTPTEIESAMAEVVISRVPSVEVVRMVNSGTEATMAALRLARGYTGKTKILKFEGCYHGHGDSLLIKAGSGVATLGLPDSPGVPAQIASMTLTVPYNDMDAVRIAFEKHGDDIAGVIVEPAAGNMGFVPPQPGFLEGLREITEQHGTLLIFDEVMTGFRVGFNCAQGHFGVTPDITCLGKVIGGGMPVGAYGGRRDIMEQIAPQGPIYQAGTLSGNPLAMAAGLATLTQLKPEHYEEFDRKANRLSEGYLAAAAKYNIPLTTNRAGAMFGVFFTDQPVTNFEQAKSSNLDMFRSYYQKMAARGVFLPPSQFEGLFLSTVHTDDDIEQTLAAVELTFKELQLEFNR.

At Lys271 the chain carries N6-(pyridoxal phosphate)lysine.

Belongs to the class-III pyridoxal-phosphate-dependent aminotransferase family. HemL subfamily. As to quaternary structure, homodimer. It depends on pyridoxal 5'-phosphate as a cofactor.

It is found in the cytoplasm. It carries out the reaction (S)-4-amino-5-oxopentanoate = 5-aminolevulinate. It participates in porphyrin-containing compound metabolism; protoporphyrin-IX biosynthesis; 5-aminolevulinate from L-glutamyl-tRNA(Glu): step 2/2. The protein is Glutamate-1-semialdehyde 2,1-aminomutase 2 of Exiguobacterium sibiricum (strain DSM 17290 / CCUG 55495 / CIP 109462 / JCM 13490 / 255-15).